The following is a 124-amino-acid chain: UPF0102 protein Noca_3248 (124 aa).

The protein belongs to the UPF0102 family.

The protein is UPF0102 protein Noca_3248 of Nocardioides sp. (strain ATCC BAA-499 / JS614).